We begin with the raw amino-acid sequence, 450 residues long: Tripartite motif-containing protein 64C (450 aa).

The RING-type zinc finger occupies 15 to 56 (CCICVNYFIDPVTTDCVHSFCRPCLCLCSEEGRAPMRCPLCR). Residues 87 to 128 (SSDNICVLHEETKELFCEADKRLLCGPCSESPEHMAHSHSPI) form a B box-type zinc finger. The Zn(2+) site is built by cysteine 92, histidine 95, cysteine 114, and histidine 120. The stretch at 191 to 218 (DEEEQRHLQALEREAKELFQQLQDSQVR) forms a coiled coil. In terms of domain architecture, B30.2/SPRY spans 269 to 450 (ELTSWCITGV…LRPFFCFGCT (182 aa)).

It belongs to the TRIM/RBCC family.

The polypeptide is Tripartite motif-containing protein 64C (TRIM64C) (Homo sapiens (Human)).